Reading from the N-terminus, the 216-residue chain is Transmembrane protein 186 (216 aa).

At 1–68 (MAFLLRVVPR…IYRFRAIRAI (68 aa)) the chain is on the mitochondrial matrix side. A disordered region spans residues 31–52 (GDSKRWVGSRSPHSREKSPGTE). Residues 69-91 (GFLSRLKLAQTAVTVVALPPGFY) traverse the membrane as a helical segment. Over 92–103 (CYSQGLMTLSSL) the chain is Mitochondrial intermembrane. Residues 104–124 (CLLGGVASFALAMLCWMSHFF) traverse the membrane as a helical segment. The Mitochondrial matrix portion of the chain corresponds to 125 to 216 (RRLVGILYVN…GTLATLKNSK (92 aa)).

This sequence belongs to the TMEM186 family. Part of the mitochondrial complex I assembly/MCIA complex that comprises at least the core subunits TMEM126B, NDUFAF1, ECSIT and ACAD9 and complement subunits such as COA1 and TMEM186. Interacts with MT-ND3.

The protein localises to the mitochondrion inner membrane. In terms of biological role, as part of the MCIA complex, required for efficient assembly of the mitochondrial complex I. The chain is Transmembrane protein 186 from Mus musculus (Mouse).